A 196-amino-acid chain; its full sequence is Protein GrpE (196 aa).

The segment at 1-41 is disordered; that stretch reads MSSKEQKTPEGQAPEEIITEQHDDVEAVEPEVSAEQVDPRD.

The protein belongs to the GrpE family. In terms of assembly, homodimer.

Its subcellular location is the cytoplasm. Its function is as follows. Participates actively in the response to hyperosmotic and heat shock by preventing the aggregation of stress-denatured proteins, in association with DnaK and GrpE. It is the nucleotide exchange factor for DnaK and may function as a thermosensor. Unfolded proteins bind initially to DnaJ; upon interaction with the DnaJ-bound protein, DnaK hydrolyzes its bound ATP, resulting in the formation of a stable complex. GrpE releases ADP from DnaK; ATP binding to DnaK triggers the release of the substrate protein, thus completing the reaction cycle. Several rounds of ATP-dependent interactions between DnaJ, DnaK and GrpE are required for fully efficient folding. The chain is Protein GrpE from Klebsiella pneumoniae (strain 342).